A 286-amino-acid polypeptide reads, in one-letter code: Protein WVD2-like 1 (286 aa).

A disordered region spans residues 31–101 (ETDEEFEVKE…ENKKHIDDED (71 aa)). Position 32 is a phosphothreonine (T32). Residues 38–47 (VKECTEEKSL) show a composition bias toward basic and acidic residues. Positions 131 to 182 (AQRAEKRKEYYQKLEEKNQALEAERNELEQRQKDEQEAALKQLRKNLKFKAK) form a coiled coil. The segment at 186–286 (NFYYEAPPAK…KPVNESSEEA (101 aa)) is disordered. Over residues 234-247 (TVSNRNRHSTGTVQ) the composition is skewed to polar residues.

Belongs to the TPX2 family.

The protein resides in the cytoplasm. It is found in the cytoskeleton. Microtubule-associated protein (MAP) that regulates the orientation of interphase cortical microtubules. Modulates both rotational polarity and anisotropic cell expansion during organ growth. Promotes clockwise root and etiolated hypocotyls coiling, clockwise leaf curling, but left-handed petiole twisting. The polypeptide is Protein WVD2-like 1 (WDL1) (Arabidopsis thaliana (Mouse-ear cress)).